A 258-amino-acid polypeptide reads, in one-letter code: Regulatory protein RecX (258 aa).

It belongs to the RecX family.

The protein resides in the cytoplasm. Modulates RecA activity. The protein is Regulatory protein RecX of Streptococcus pneumoniae (strain Hungary19A-6).